We begin with the raw amino-acid sequence, 525 residues long: Anti-silencing protein 2 (525 aa).

A disordered region spans residues 467–525 (LPRVPTDSPQLPSKDKSQETAKKDDRPKLVANEPVTLDTSTPPVAQSLADSKHCSGLHK). Residues 479-494 (SKDKSQETAKKDDRPK) show a composition bias toward basic and acidic residues.

Derepression of silent mating type loci when overexpressed. The polypeptide is Anti-silencing protein 2 (ASF2) (Saccharomyces cerevisiae (strain ATCC 204508 / S288c) (Baker's yeast)).